A 435-amino-acid chain; its full sequence is Alpha-ketoglutarate permease (435 aa).

The Cytoplasmic portion of the chain corresponds to 1 to 13 (MNTVHAKGNVLNK). A helical transmembrane segment spans residues 14 to 34 (IGIPSHMVWGYIGVVIFMVGD). The Extracellular segment spans residues 35-56 (GLEQGWLSPFLVDHGLSMQQSA). A helical membrane pass occupies residues 57 to 77 (SLFTMYGIAVTISAWLSGTFV). Residues 78-85 (QTWGPRKT) are Cytoplasmic-facing. The chain crosses the membrane as a helical span at residues 86–106 (MTVGLLAFILGSAAFIGWAIP). Over 107-112 (HMYYPA) the chain is Extracellular. A helical transmembrane segment spans residues 113-133 (LLGSYALRGLGYPLFAYSFLV). Topologically, residues 134–142 (WVSYSTSQN) are cytoplasmic. A helical transmembrane segment spans residues 143 to 163 (ILGKAVGWFWFMFTCGLNVLG). Topologically, residues 164–176 (PFYSSYAVPAFGE) are extracellular. Residues 177–197 (INTLWSALLFVAAGGILALFF) traverse the membrane as a helical segment. Over 198 to 228 (NKDKFTPIQKQDQPKWKELSKAFTIMFENPK) the chain is Cytoplasmic. A helical membrane pass occupies residues 229 to 249 (VGIGGVVKTINAIGQFGFAIF). Residues 250–264 (LPTYLARYGYSVSEW) lie on the Extracellular side of the membrane. Residues 265-285 (LQIWGTLFFVNIVFNIIFGAV) form a helical membrane-spanning segment. Topologically, residues 286–293 (GDKLGWRN) are cytoplasmic. Residues 294–314 (TVMWFGGVGCGIFTLALYYTP) traverse the membrane as a helical segment. Residues 315–320 (QLIGHQ) are Extracellular-facing. Residues 321-341 (YWVLMIIACCYGAALAGYVPL) traverse the membrane as a helical segment. The Cytoplasmic segment spans residues 342-354 (SALLPTLAPDNKG). The helical transmembrane segment at 355 to 375 (AAMSVLNLGSGLCAFIAPGIV) threads the bilayer. Residue Ser-376 is a topological domain, extracellular. A helical membrane pass occupies residues 377–397 (LFIGPLGAGGVIWIFAALYFF). The Cytoplasmic segment spans residues 398 to 435 (SAFLTRFLTISEQSTDVYTEERFVRENVQTNFDKTVKQ).

Belongs to the major facilitator superfamily. Sugar transporter (TC 2.A.1.1) family. CsbX subfamily.

It localises to the cell membrane. The polypeptide is Alpha-ketoglutarate permease (csbX) (Bacillus subtilis (strain 168)).